The following is a 440-amino-acid chain: Xaa-Pro dipeptidase (440 aa).

Mn(2+)-binding residues include D244, D255, H336, E381, and E420.

Belongs to the peptidase M24B family. The cofactor is Mn(2+). Post-translationally, the N-terminus is blocked.

It carries out the reaction Xaa-L-Pro dipeptide + H2O = an L-alpha-amino acid + L-proline. The enzyme catalyses diisopropyl fluorophosphate + H2O = diisopropyl phosphate + fluoride + 2 H(+). Its function is as follows. Splits dipeptides with a prolyl or hydroxyprolyl residue in the C-terminal position and a nonpolar amino acid at the N-terminal position. Also catalyzes the hydrolysis of toxic organophosphorus cholinesterase-inhibiting compounds including nerve gases such as diisopropylfluorophosphate (DFP), O-isopropyl methylphosphonofluoridate (sarin), O-pinacolyl methylphosphonofluoridate (soman), and O-cyclohexyl methylphosphonofluoridate. The polypeptide is Xaa-Pro dipeptidase (pepQ) (Pseudoalteromonas haloplanktis (Alteromonas haloplanktis)).